A 452-amino-acid chain; its full sequence is Exodeoxyribonuclease 7 large subunit (452 aa).

It belongs to the XseA family. As to quaternary structure, heterooligomer composed of large and small subunits.

The protein localises to the cytoplasm. It catalyses the reaction Exonucleolytic cleavage in either 5'- to 3'- or 3'- to 5'-direction to yield nucleoside 5'-phosphates.. Functionally, bidirectionally degrades single-stranded DNA into large acid-insoluble oligonucleotides, which are then degraded further into small acid-soluble oligonucleotides. The chain is Exodeoxyribonuclease 7 large subunit from Bacillus mycoides (strain KBAB4) (Bacillus weihenstephanensis).